The sequence spans 340 residues: Ferrochelatase (340 aa).

2 residues coordinate Fe cation: histidine 218 and glutamate 298.

This sequence belongs to the ferrochelatase family.

The protein resides in the cytoplasm. It catalyses the reaction heme b + 2 H(+) = protoporphyrin IX + Fe(2+). It participates in porphyrin-containing compound metabolism; protoheme biosynthesis; protoheme from protoporphyrin-IX: step 1/1. Its function is as follows. Catalyzes the ferrous insertion into protoporphyrin IX. In Wolbachia sp. subsp. Brugia malayi (strain TRS), this protein is Ferrochelatase.